The chain runs to 234 residues: Adenosine 5'-phosphosulfate reductase (234 aa).

Residues Cys120, Cys121, Cys203, and Cys206 each contribute to the [4Fe-4S] cluster site. Cys229 acts as the Nucleophile; cysteine thiosulfonate intermediate in catalysis.

Belongs to the PAPS reductase family. CysH subfamily. [4Fe-4S] cluster is required as a cofactor.

The protein resides in the cytoplasm. The catalysed reaction is [thioredoxin]-disulfide + sulfite + AMP + 2 H(+) = adenosine 5'-phosphosulfate + [thioredoxin]-dithiol. It functions in the pathway sulfur metabolism; hydrogen sulfide biosynthesis; sulfite from sulfate. Its function is as follows. Catalyzes the formation of sulfite from adenosine 5'-phosphosulfate (APS) using thioredoxin as an electron donor. This Bacillus cytotoxicus (strain DSM 22905 / CIP 110041 / 391-98 / NVH 391-98) protein is Adenosine 5'-phosphosulfate reductase.